Reading from the N-terminus, the 276-residue chain is Diaminopimelate epimerase (276 aa).

Substrate-binding residues include N13, Q46, and N66. C75 (proton donor) is an active-site residue. Substrate is bound by residues 76–77 (GN), N159, N192, and 210–211 (ER). The active-site Proton acceptor is C219. Substrate is bound at residue 220–221 (GT).

Belongs to the diaminopimelate epimerase family. As to quaternary structure, homodimer.

It localises to the cytoplasm. It carries out the reaction (2S,6S)-2,6-diaminopimelate = meso-2,6-diaminopimelate. It participates in amino-acid biosynthesis; L-lysine biosynthesis via DAP pathway; DL-2,6-diaminopimelate from LL-2,6-diaminopimelate: step 1/1. Its function is as follows. Catalyzes the stereoinversion of LL-2,6-diaminopimelate (L,L-DAP) to meso-diaminopimelate (meso-DAP), a precursor of L-lysine and an essential component of the bacterial peptidoglycan. In Cellvibrio japonicus (strain Ueda107) (Pseudomonas fluorescens subsp. cellulosa), this protein is Diaminopimelate epimerase.